The following is a 363-amino-acid chain: Phosphoserine aminotransferase (363 aa).

L-glutamate is bound at residue arginine 41. Residues 75–76 (AS), tryptophan 100, threonine 155, aspartate 175, and glutamine 198 contribute to the pyridoxal 5'-phosphate site. The residue at position 199 (lysine 199) is an N6-(pyridoxal phosphate)lysine. 239–240 (NT) provides a ligand contact to pyridoxal 5'-phosphate.

This sequence belongs to the class-V pyridoxal-phosphate-dependent aminotransferase family. SerC subfamily. As to quaternary structure, homodimer. The cofactor is pyridoxal 5'-phosphate.

The protein localises to the cytoplasm. The enzyme catalyses O-phospho-L-serine + 2-oxoglutarate = 3-phosphooxypyruvate + L-glutamate. It carries out the reaction 4-(phosphooxy)-L-threonine + 2-oxoglutarate = (R)-3-hydroxy-2-oxo-4-phosphooxybutanoate + L-glutamate. The protein operates within amino-acid biosynthesis; L-serine biosynthesis; L-serine from 3-phospho-D-glycerate: step 2/3. Its function is as follows. Catalyzes the reversible conversion of 3-phosphohydroxypyruvate to phosphoserine and of 3-hydroxy-2-oxo-4-phosphonooxybutanoate to phosphohydroxythreonine. This chain is Phosphoserine aminotransferase, found in Streptococcus suis (strain 98HAH33).